The chain runs to 266 residues: Glutamate racemase (266 aa).

Substrate contacts are provided by residues 7–8 (DS) and 39–40 (YG). The active-site Proton donor/acceptor is the cysteine 70. Position 71 to 72 (71 to 72 (NT)) interacts with substrate. The active-site Proton donor/acceptor is the cysteine 186. Residue 187–188 (TH) participates in substrate binding.

Belongs to the aspartate/glutamate racemases family.

It catalyses the reaction L-glutamate = D-glutamate. It functions in the pathway cell wall biogenesis; peptidoglycan biosynthesis. Provides the (R)-glutamate required for cell wall biosynthesis. This Campylobacter curvus (strain 525.92) protein is Glutamate racemase.